The chain runs to 1067 residues: SURP and G-patch domain-containing protein 2 (1067 aa).

S93 carries the phosphoserine modification. Positions K177–E189 are enriched in basic and acidic residues. The tract at residues K177–Q199 is disordered. Phosphoserine is present on S206. A Glycyl lysine isopeptide (Lys-Gly) (interchain with G-Cter in SUMO2) cross-link involves residue K219. The residue at position 265 (T265) is a Phosphothreonine. 2 positions are modified to phosphoserine: S267 and S586. The SURP motif 1 repeat unit spans residues I573 to K616. The tract at residues S668–T767 is disordered. A compositionally biased stretch (polar residues) spans T680–T691. The residue at position 740 (S740) is a Phosphoserine. T744 bears the Phosphothreonine mark. The SURP motif 2 repeat unit spans residues T770 to Y813. Over residues S825 to T840 the composition is skewed to polar residues. Disordered stretches follow at residues S825–K944 and R967–Q991. Position 838 is a phosphoserine (S838). Residues K843–Q856 are compositionally biased toward basic and acidic residues. Positions L866 to E883 are enriched in acidic residues. Residues A919–S931 show a composition bias toward polar residues. Positions G975–P984 are enriched in basic residues. The short motif at K980–K985 is the Nuclear localization signal element. The region spanning D996–P1042 is the G-patch domain.

It localises to the nucleus. Its function is as follows. May play a role in mRNA splicing. In Mus musculus (Mouse), this protein is SURP and G-patch domain-containing protein 2 (Sugp2).